Consider the following 214-residue polypeptide: GTP-binding nuclear protein GSP1 (214 aa).

Residues 4–172 (RELTYKICLI…LHLARIFTGR (169 aa)) form the Small GTPase Ran-type domain. 17-22 (GVGKTT) lines the GTP pocket. The interval 34–42 (KNYNATVGA) is switch-I. GTP is bound by residues glycine 66, 121–124 (NKID), and 151–153 (SAK). A switch-II region spans residues 66-82 (GQEKKAVLKDVYYIGAS).

It belongs to the small GTPase superfamily. Ran family. Found in a nuclear export complex with RanGTP, exportin and pre-miRNA.

It is found in the nucleus. Functionally, GTP-binding protein involved in nucleocytoplasmic transport. Required for the import of protein into the nucleus and also for RNA export. This Encephalitozoon cuniculi (strain GB-M1) (Microsporidian parasite) protein is GTP-binding nuclear protein GSP1 (GSP1).